The primary structure comprises 291 residues: Small ribosomal subunit protein uS2 (291 aa).

Positions Asp-238 to Glu-247 are enriched in acidic residues. The disordered stretch occupies residues Asp-238–Arg-291. The span at Val-249–Thr-259 shows a compositional bias: basic and acidic residues. The span at Val-274–Arg-291 shows a compositional bias: acidic residues.

This sequence belongs to the universal ribosomal protein uS2 family.

The polypeptide is Small ribosomal subunit protein uS2 (rpsB) (Treponema pallidum (strain Nichols)).